A 396-amino-acid chain; its full sequence is Inositol polyphosphate multikinase (396 aa).

Positions 1–13 (MAAEPPALRLRPP) are enriched in low complexity. The disordered stretch occupies residues 1–22 (MAAEPPALRLRPPGSTGDSPPV). Position 2 is an N-acetylalanine (alanine 2). Serine 19 is modified (phosphoserine). ATP is bound at residue lysine 58. Residue arginine 65 participates in substrate binding. Residues 114–116 (EDV) and aspartate 127 contribute to the ATP site. Substrate is bound by residues lysine 129, 143-150 (KIQQQVSK), and glutamine 179. The Nuclear localization signal signature appears at 300-310 (RHRKLYAKKHQ). Aspartate 365 serves as a coordination point for ATP.

This sequence belongs to the inositol phosphokinase (IPK) family. Mg(2+) is required as a cofactor. In terms of tissue distribution, highly expressed in kidney, and at lower levels in hippocampus, brain cortex, cerebellum, heart and lung.

The protein resides in the nucleus. It catalyses the reaction 1D-myo-inositol 1,4,5-trisphosphate + 2 ATP = 1D-myo-inositol 1,3,4,5,6-pentakisphosphate + 2 ADP + 2 H(+). The catalysed reaction is 1D-myo-inositol 1,3,4,6-tetrakisphosphate + ATP = 1D-myo-inositol 1,3,4,5,6-pentakisphosphate + ADP + H(+). It carries out the reaction 1-octadecanoyl-2-(5Z,8Z,11Z,14Z)-eicosatetraenoyl-sn-glycero-3-phospho-1D-myo-inositol 4,5-bisphosphate + ATP = 1-octadecanoyl-2-(5Z,8Z,11Z,14Z-eicosatetraenoyl)-sn-glycero-3-phospho-(1D-myo-inositol 3,4,5-triphosphate) + ADP + H(+). The enzyme catalyses a 1,2-diacyl-sn-glycero-3-phospho-(1D-myo-inositol-4,5-bisphosphate) + ATP = a 1,2-diacyl-sn-glycero-3-phospho-(1D-myo-inositol-3,4,5-trisphosphate) + ADP + H(+). It catalyses the reaction 1D-myo-inositol 1,4,5,6-tetrakisphosphate + ATP = 1D-myo-inositol 1,3,4,5,6-pentakisphosphate + ADP + H(+). It functions in the pathway phospholipid metabolism; phosphatidylinositol metabolism. In terms of biological role, inositol phosphate kinase with a broad substrate specificity. Phosphorylates inositol 1,4,5-trisphosphate (Ins(1,4,5)P3) first to inositol 1,3,4,5-tetrakisphosphate and then to inositol 1,3,4,5,6-pentakisphosphate (Ins(1,3,4,5,6)P5). Phosphorylates inositol 1,3,4,6-tetrakisphosphate (Ins(1,3,4,6)P4). Phosphorylates inositol 1,4,5,6-tetrakisphosphate (Ins(1,4,5,6)P4). Phosphorylates glycero-3-phospho-1D-myo-inositol 4,5-bisphosphate to glycero-3-phospho-1D-myo-inositol 3,4,5-trisphosphate. Plays an important role in MLKL-mediated necroptosis via its role in the biosynthesis of inositol pentakisphosphate (InsP5) and inositol hexakisphosphate (InsP6). Binding of these highly phosphorylated inositol phosphates to MLKL mediates the release of an N-terminal auto-inhibitory region, leading to activation of the kinase. Essential for activated phospho-MLKL to oligomerize and localize to the cell membrane during necroptosis. Required for normal embryonic development, probably via its role in the biosynthesis of inositol 1,3,4,5,6-pentakisphosphate (Ins(1,3,4,5,6)P5) and inositol hexakisphosphate (InsP6). In Rattus norvegicus (Rat), this protein is Inositol polyphosphate multikinase (Ipmk).